A 347-amino-acid polypeptide reads, in one-letter code: S-adenosylmethionine:tRNA ribosyltransferase-isomerase (347 aa).

Belongs to the QueA family. Monomer.

The protein localises to the cytoplasm. The catalysed reaction is 7-aminomethyl-7-carbaguanosine(34) in tRNA + S-adenosyl-L-methionine = epoxyqueuosine(34) in tRNA + adenine + L-methionine + 2 H(+). It functions in the pathway tRNA modification; tRNA-queuosine biosynthesis. Functionally, transfers and isomerizes the ribose moiety from AdoMet to the 7-aminomethyl group of 7-deazaguanine (preQ1-tRNA) to give epoxyqueuosine (oQ-tRNA). In Treponema denticola (strain ATCC 35405 / DSM 14222 / CIP 103919 / JCM 8153 / KCTC 15104), this protein is S-adenosylmethionine:tRNA ribosyltransferase-isomerase.